The primary structure comprises 152 residues: Ribosome maturation factor RimP (152 aa).

It belongs to the RimP family.

The protein localises to the cytoplasm. In terms of biological role, required for maturation of 30S ribosomal subunits. The protein is Ribosome maturation factor RimP of Alkaliphilus metalliredigens (strain QYMF).